The sequence spans 289 residues: Glyceraldehyde-3-phosphate dehydrogenase (289 aa).

Residues D12 and R57 each contribute to the NAD(+) site. D-glyceraldehyde 3-phosphate-binding positions include 128–130 (SCT), T159, 188–189 (TG), and R211. The Nucleophile role is filled by C129.

The protein belongs to the glyceraldehyde-3-phosphate dehydrogenase family. In terms of assembly, homotetramer.

It localises to the cytoplasm. It catalyses the reaction D-glyceraldehyde 3-phosphate + phosphate + NAD(+) = (2R)-3-phospho-glyceroyl phosphate + NADH + H(+). It participates in carbohydrate degradation; glycolysis; pyruvate from D-glyceraldehyde 3-phosphate: step 1/5. The protein is Glyceraldehyde-3-phosphate dehydrogenase (GPD) of Amanita muscaria (Fly agaric).